Reading from the N-terminus, the 497-residue chain is Peptidoglycan endopeptidase RipA (497 aa).

Positions 1-39 (MRRTVRALATRVHGRVCAVPLVVGMLLATALYGGGPAAA) are cleaved as a signal peptide. Residues 177–192 (ARLAKEKADQAARDAE) show a composition bias toward basic and acidic residues. 2 disordered regions span residues 177–198 (ARLAKEKADQAARDAESSQDNA) and 253–297 (APAA…GQNW). The span at 255–273 (AAAPAPVPNSAPAPVPGAQ) shows a compositional bias: pro residues. A NlpC/P60 domain is found at 365–497 (REAVEYVIRR…TPYVTRLIEY (133 aa)). The Nucleophile role is filled by cysteine 408. Histidine 457 serves as the catalytic Proton acceptor. Residue glutamate 469 is part of the active site.

This sequence belongs to the peptidase C40 family. Monomer.

The protein localises to the secreted. Its function is as follows. Peptidoglycan endopeptidase that cleaves the bond between D-glutamate and meso-diaminopimelate. Binds and degrades high-molecular weight peptidoglycan. Required for normal separation of daughter cells after cell division and for cell wall integrity. The chain is Peptidoglycan endopeptidase RipA (ripA) from Mycolicibacterium smegmatis (strain ATCC 700084 / mc(2)155) (Mycobacterium smegmatis).